A 101-amino-acid chain; its full sequence is Putative defensin-like protein 86 (101 aa).

The signal sequence occupies residues 1-27; it reads MAITKMSSLIILSLMMLTFIYIPMISG. Cystine bridges form between cysteine 35/cysteine 71, cysteine 39/cysteine 59, cysteine 45/cysteine 69, and cysteine 49/cysteine 70.

This sequence belongs to the DEFL family.

It localises to the secreted. The polypeptide is Putative defensin-like protein 86 (LCR82) (Arabidopsis thaliana (Mouse-ear cress)).